We begin with the raw amino-acid sequence, 820 residues long: Phenylalanine--tRNA ligase beta subunit (820 aa).

One can recognise a tRNA-binding domain in the interval 39 to 150 (PAPVGGVLLV…GTAAPGTPLR (112 aa)). The 76-residue stretch at 435–510 (EVPQTITTTG…RLHGFTELPE (76 aa)) folds into the B5 domain. 4 residues coordinate Mg(2+): Asp-488, Asp-494, Glu-497, and Glu-498. The 92-residue stretch at 727-818 (SRAPAAWRDL…AVKARGWAIR (92 aa)) folds into the FDX-ACB domain.

The protein belongs to the phenylalanyl-tRNA synthetase beta subunit family. Type 1 subfamily. Tetramer of two alpha and two beta subunits. Mg(2+) serves as cofactor.

Its subcellular location is the cytoplasm. The catalysed reaction is tRNA(Phe) + L-phenylalanine + ATP = L-phenylalanyl-tRNA(Phe) + AMP + diphosphate + H(+). This chain is Phenylalanine--tRNA ligase beta subunit (pheT), found in Deinococcus radiodurans (strain ATCC 13939 / DSM 20539 / JCM 16871 / CCUG 27074 / LMG 4051 / NBRC 15346 / NCIMB 9279 / VKM B-1422 / R1).